A 171-amino-acid chain; its full sequence is Translationally-controlled tumor protein homolog (171 aa).

The TCTP domain occupies 1–171 (MIIYRDCISQ…FKDGLEMEKC (171 aa)).

This sequence belongs to the TCTP family. Expressed by the venom gland.

It is found in the secreted. In terms of biological role, venom protein that causes edema, enhances vascular permeability and is likely related to the inflammatory activity of the venom. This is Translationally-controlled tumor protein homolog from Micrurus fulvius (Eastern coral snake).